The sequence spans 270 residues: Glutamate racemase (270 aa).

Substrate contacts are provided by residues 13–14 (DS) and 45–46 (YG). The active-site Proton donor/acceptor is the Cys77. 78–79 (NT) is a substrate binding site. Cys185 acts as the Proton donor/acceptor in catalysis. Residue 186-187 (TH) participates in substrate binding.

The protein belongs to the aspartate/glutamate racemases family.

The catalysed reaction is L-glutamate = D-glutamate. Its pathway is cell wall biogenesis; peptidoglycan biosynthesis. Its function is as follows. Provides the (R)-glutamate required for cell wall biosynthesis. The sequence is that of Glutamate racemase from Vibrio parahaemolyticus serotype O3:K6 (strain RIMD 2210633).